The chain runs to 42 residues: Potassium channel toxin gamma-KTx 1.2 (42 aa).

4 disulfides stabilise this stretch: Cys-5-Cys-23, Cys-11-Cys-34, Cys-20-Cys-39, and Cys-24-Cys-41.

The protein belongs to the ergtoxin family. Gamma-KTx 1 subfamily. In terms of tissue distribution, expressed by the venom gland.

Its subcellular location is the secreted. Its function is as follows. Blocks Kv11/ERG potassium channels. The polypeptide is Potassium channel toxin gamma-KTx 1.2 (Centruroides elegans (Bark scorpion)).